The following is a 156-amino-acid chain: ATP synthase subunit b (156 aa).

Residues 7–29 form a helical membrane-spanning segment; it reads LIAQAISFAILIWFTTKFVWPYL.

Belongs to the ATPase B chain family. As to quaternary structure, F-type ATPases have 2 components, F(1) - the catalytic core - and F(0) - the membrane proton channel. F(1) has five subunits: alpha(3), beta(3), gamma(1), delta(1), epsilon(1). F(0) has three main subunits: a(1), b(2) and c(10-14). The alpha and beta chains form an alternating ring which encloses part of the gamma chain. F(1) is attached to F(0) by a central stalk formed by the gamma and epsilon chains, while a peripheral stalk is formed by the delta and b chains.

It is found in the cell inner membrane. In terms of biological role, f(1)F(0) ATP synthase produces ATP from ADP in the presence of a proton or sodium gradient. F-type ATPases consist of two structural domains, F(1) containing the extramembraneous catalytic core and F(0) containing the membrane proton channel, linked together by a central stalk and a peripheral stalk. During catalysis, ATP synthesis in the catalytic domain of F(1) is coupled via a rotary mechanism of the central stalk subunits to proton translocation. Functionally, component of the F(0) channel, it forms part of the peripheral stalk, linking F(1) to F(0). The polypeptide is ATP synthase subunit b (Methylobacillus flagellatus (strain ATCC 51484 / DSM 6875 / VKM B-1610 / KT)).